The following is a 415-amino-acid chain: Serine hydroxymethyltransferase (415 aa).

(6S)-5,6,7,8-tetrahydrofolate contacts are provided by residues Leu-121 and 125-127 (GHL). N6-(pyridoxal phosphate)lysine is present on Lys-230. 355-357 (SPF) is a (6S)-5,6,7,8-tetrahydrofolate binding site.

This sequence belongs to the SHMT family. Homodimer. Pyridoxal 5'-phosphate serves as cofactor.

The protein localises to the cytoplasm. The catalysed reaction is (6R)-5,10-methylene-5,6,7,8-tetrahydrofolate + glycine + H2O = (6S)-5,6,7,8-tetrahydrofolate + L-serine. It participates in one-carbon metabolism; tetrahydrofolate interconversion. The protein operates within amino-acid biosynthesis; glycine biosynthesis; glycine from L-serine: step 1/1. Catalyzes the reversible interconversion of serine and glycine with tetrahydrofolate (THF) serving as the one-carbon carrier. This reaction serves as the major source of one-carbon groups required for the biosynthesis of purines, thymidylate, methionine, and other important biomolecules. Also exhibits THF-independent aldolase activity toward beta-hydroxyamino acids, producing glycine and aldehydes, via a retro-aldol mechanism. This chain is Serine hydroxymethyltransferase, found in Lactococcus lactis subsp. lactis (strain IL1403) (Streptococcus lactis).